A 181-amino-acid polypeptide reads, in one-letter code: Peptidyl-tRNA hydrolase (181 aa).

Tyr-14 contacts tRNA. Catalysis depends on His-19, which acts as the Proton acceptor. TRNA contacts are provided by Tyr-62, Asn-64, and Asn-108.

It belongs to the PTH family. In terms of assembly, monomer.

It localises to the cytoplasm. The enzyme catalyses an N-acyl-L-alpha-aminoacyl-tRNA + H2O = an N-acyl-L-amino acid + a tRNA + H(+). In terms of biological role, hydrolyzes ribosome-free peptidyl-tRNAs (with 1 or more amino acids incorporated), which drop off the ribosome during protein synthesis, or as a result of ribosome stalling. Functionally, catalyzes the release of premature peptidyl moieties from peptidyl-tRNA molecules trapped in stalled 50S ribosomal subunits, and thus maintains levels of free tRNAs and 50S ribosomes. This Campylobacter jejuni subsp. jejuni serotype O:2 (strain ATCC 700819 / NCTC 11168) protein is Peptidyl-tRNA hydrolase.